The primary structure comprises 156 residues: 6,7-dimethyl-8-ribityllumazine synthase (156 aa).

5-amino-6-(D-ribitylamino)uracil contacts are provided by residues F22, 57–59 (AYE), and 81–83 (TVI). 86 to 87 (GT) provides a ligand contact to (2S)-2-hydroxy-3-oxobutyl phosphate. H89 acts as the Proton donor in catalysis. Residue F114 coordinates 5-amino-6-(D-ribitylamino)uracil. R128 is a binding site for (2S)-2-hydroxy-3-oxobutyl phosphate.

The protein belongs to the DMRL synthase family. In terms of assembly, forms an icosahedral capsid composed of 60 subunits, arranged as a dodecamer of pentamers.

The catalysed reaction is (2S)-2-hydroxy-3-oxobutyl phosphate + 5-amino-6-(D-ribitylamino)uracil = 6,7-dimethyl-8-(1-D-ribityl)lumazine + phosphate + 2 H2O + H(+). Its pathway is cofactor biosynthesis; riboflavin biosynthesis; riboflavin from 2-hydroxy-3-oxobutyl phosphate and 5-amino-6-(D-ribitylamino)uracil: step 1/2. Catalyzes the formation of 6,7-dimethyl-8-ribityllumazine by condensation of 5-amino-6-(D-ribitylamino)uracil with 3,4-dihydroxy-2-butanone 4-phosphate. This is the penultimate step in the biosynthesis of riboflavin. In Cronobacter sakazakii (strain ATCC BAA-894) (Enterobacter sakazakii), this protein is 6,7-dimethyl-8-ribityllumazine synthase.